A 143-amino-acid polypeptide reads, in one-letter code: Probable cyclic pyranopterin monophosphate synthase (143 aa).

Substrate-binding positions include 61-63 (MCH) and 97-98 (ME). D112 is a catalytic residue.

This sequence belongs to the MoaC family. As to quaternary structure, homohexamer; trimer of dimers.

The catalysed reaction is (8S)-3',8-cyclo-7,8-dihydroguanosine 5'-triphosphate = cyclic pyranopterin phosphate + diphosphate. It participates in cofactor biosynthesis; molybdopterin biosynthesis. Catalyzes the conversion of (8S)-3',8-cyclo-7,8-dihydroguanosine 5'-triphosphate to cyclic pyranopterin monophosphate (cPMP). The polypeptide is Probable cyclic pyranopterin monophosphate synthase (Sulfolobus acidocaldarius (strain ATCC 33909 / DSM 639 / JCM 8929 / NBRC 15157 / NCIMB 11770)).